Consider the following 530-residue polypeptide: B3 domain-containing protein REM-like 3 (530 aa).

2 consecutive DNA-binding regions (TF-B3) follow at residues 11-103 (KPHF…FGLS) and 144-241 (DFVV…FPLE). The disordered stretch occupies residues 251 to 276 (SKKVKQEVEHEESVKEETNVESGKLK). Residues 254–276 (VKQEVEHEESVKEETNVESGKLK) show a composition bias toward basic and acidic residues. DNA-binding regions (TF-B3) lie at residues 296 to 393 (NFVV…FPLE) and 431 to 530 (SFVV…WDKK).

The protein localises to the nucleus. The sequence is that of B3 domain-containing protein REM-like 3 from Arabidopsis thaliana (Mouse-ear cress).